Consider the following 509-residue polypeptide: Bifunctional purine biosynthesis protein PurH (509 aa).

Residues 1–144 enclose the MGS-like domain; it reads MKRALISVSD…KNYAAVTVVV (144 aa).

It belongs to the PurH family.

The catalysed reaction is (6R)-10-formyltetrahydrofolate + 5-amino-1-(5-phospho-beta-D-ribosyl)imidazole-4-carboxamide = 5-formamido-1-(5-phospho-D-ribosyl)imidazole-4-carboxamide + (6S)-5,6,7,8-tetrahydrofolate. The enzyme catalyses IMP + H2O = 5-formamido-1-(5-phospho-D-ribosyl)imidazole-4-carboxamide. It functions in the pathway purine metabolism; IMP biosynthesis via de novo pathway; 5-formamido-1-(5-phospho-D-ribosyl)imidazole-4-carboxamide from 5-amino-1-(5-phospho-D-ribosyl)imidazole-4-carboxamide (10-formyl THF route): step 1/1. It participates in purine metabolism; IMP biosynthesis via de novo pathway; IMP from 5-formamido-1-(5-phospho-D-ribosyl)imidazole-4-carboxamide: step 1/1. The protein is Bifunctional purine biosynthesis protein PurH of Listeria innocua serovar 6a (strain ATCC BAA-680 / CLIP 11262).